Reading from the N-terminus, the 228-residue chain is Orotidine 5'-phosphate decarboxylase (228 aa).

Substrate contacts are provided by residues Asp-10, Lys-33, 60–69 (DLKLYDIPHT), Thr-116, Arg-178, Gln-187, Gly-207, and Arg-208. The active-site Proton donor is the Lys-62.

It belongs to the OMP decarboxylase family. Type 1 subfamily. Homodimer.

The catalysed reaction is orotidine 5'-phosphate + H(+) = UMP + CO2. The protein operates within pyrimidine metabolism; UMP biosynthesis via de novo pathway; UMP from orotate: step 2/2. Functionally, catalyzes the decarboxylation of orotidine 5'-monophosphate (OMP) to uridine 5'-monophosphate (UMP). This Oenococcus oeni (strain ATCC BAA-331 / PSU-1) protein is Orotidine 5'-phosphate decarboxylase.